A 154-amino-acid chain; its full sequence is MLRLLLLPLFLFTLSMCMGQTFQYSRGWTNGKRSFNAASPLLANGHLHRGSELGLTDLYDLQDWSSDRRLERCLSQLQRSLIARNCVPGSDFNANRVDPDPENSVHPRLSNINGENVLYSSANIPNRHRQSNELLEELSAAGGASAEPNVFGKH.

A signal peptide spans 1 to 19 (MLRLLLLPLFLFTLSMCMG). A Pyrrolidone carboxylic acid modification is found at Gln20. Asn30 carries the post-translational modification Asparagine amide. Residues 70–154 (LERCLSQLQR…SAEPNVFGKH (85 aa)) constitute a propeptide that is removed on maturation.

This sequence belongs to the corazonin family. As to expression, expression is restricted to 24 neurons in the larval CNS (8 in the brain and 16 in the ventral nerve cord) and 12-16 neurons in the pars lateralis of the adult brain.

The protein localises to the secreted. Its function is as follows. Cardioactive peptide. Corazonin is probably involved in the physiological regulation of the heart beat. Clock (Clk) and cycle (cyc) proteins negatively regulate Crz transcription in a cell-specific manner. This is Pro-corazonin (Crz) from Drosophila simulans (Fruit fly).